The following is a 184-amino-acid chain: Photosystem I assembly protein Ycf4 (184 aa).

Transmembrane regions (helical) follow at residues Ala-25–Gly-45 and Ile-57–Ser-77.

Belongs to the Ycf4 family.

It localises to the plastid. It is found in the chloroplast thylakoid membrane. Its function is as follows. Seems to be required for the assembly of the photosystem I complex. The polypeptide is Photosystem I assembly protein Ycf4 (Cycas taitungensis (Prince sago)).